The primary structure comprises 165 residues: 3-isopropylmalate dehydratase small subunit (165 aa).

It belongs to the LeuD family. LeuD type 2 subfamily. In terms of assembly, heterodimer of LeuC and LeuD.

The enzyme catalyses (2R,3S)-3-isopropylmalate = (2S)-2-isopropylmalate. It functions in the pathway amino-acid biosynthesis; L-leucine biosynthesis; L-leucine from 3-methyl-2-oxobutanoate: step 2/4. Functionally, catalyzes the isomerization between 2-isopropylmalate and 3-isopropylmalate, via the formation of 2-isopropylmaleate. The protein is 3-isopropylmalate dehydratase small subunit of Lachnoclostridium phytofermentans (strain ATCC 700394 / DSM 18823 / ISDg) (Clostridium phytofermentans).